The primary structure comprises 514 residues: Cytochrome c-552 (514 aa).

An N-terminal signal peptide occupies residues 1–21 (MKFKLLLAGSLVAVGAMALLA). 10 residues coordinate heme c: histidine 101, cysteine 129, cysteine 132, lysine 133, cysteine 167, cysteine 170, histidine 171, cysteine 210, cysteine 213, and histidine 214. 4 residues coordinate Ca(2+): glutamate 216, tyrosine 217, lysine 279, and glutamine 281. Tyrosine 217 contributes to the substrate binding site. Histidine 282 is a substrate binding site. Residues histidine 293, cysteine 300, cysteine 303, histidine 304, histidine 318, cysteine 332, cysteine 335, histidine 336, and histidine 411 each coordinate heme c.

Belongs to the cytochrome c-552 family. As to quaternary structure, homodimer. Probably also exists as a membrane-associated heterooligomeric complex. Requires Ca(2+) as cofactor. Heme c serves as cofactor.

It is found in the periplasm. The enzyme catalyses 6 Fe(III)-[cytochrome c] + NH4(+) + 2 H2O = 6 Fe(II)-[cytochrome c] + nitrite + 8 H(+). Its pathway is nitrogen metabolism; nitrate reduction (assimilation). Its function is as follows. Catalyzes the reduction of nitrite to ammonia, consuming six electrons in the process. Has very low activity toward hydroxylamine, and even lower activity toward sulfite. Sulfite reductase activity is maximal at neutral pH. The protein is Cytochrome c-552 (nrfA) of Sulfurospirillum deleyianum.